Consider the following 454-residue polypeptide: Bifunctional protein GlmU (454 aa).

Residues 1 to 226 (MSLNVVILAA…PIETEGANNR (226 aa)) form a pyrophosphorylase region. UDP-N-acetyl-alpha-D-glucosamine contacts are provided by residues 8-11 (LAAG), lysine 22, glutamine 73, 78-79 (GT), 100-102 (YGD), glycine 137, glutamate 151, asparagine 166, and asparagine 224. Aspartate 102 contributes to the Mg(2+) binding site. Asparagine 224 contacts Mg(2+). Residues 227 to 247 (VQLAALERAYQARRAEELMLA) form a linker region. Positions 248-454 (GANLRDPARI…GWQRPVKKPK (207 aa)) are N-acetyltransferase. Arginine 330 and lysine 348 together coordinate UDP-N-acetyl-alpha-D-glucosamine. Catalysis depends on histidine 360, which acts as the Proton acceptor. Residues tyrosine 363 and asparagine 374 each coordinate UDP-N-acetyl-alpha-D-glucosamine. Acetyl-CoA contacts are provided by residues alanine 377, 383–384 (NY), serine 402, alanine 420, and arginine 437.

This sequence in the N-terminal section; belongs to the N-acetylglucosamine-1-phosphate uridyltransferase family. In the C-terminal section; belongs to the transferase hexapeptide repeat family. In terms of assembly, homotrimer. Requires Mg(2+) as cofactor.

Its subcellular location is the cytoplasm. The catalysed reaction is alpha-D-glucosamine 1-phosphate + acetyl-CoA = N-acetyl-alpha-D-glucosamine 1-phosphate + CoA + H(+). It carries out the reaction N-acetyl-alpha-D-glucosamine 1-phosphate + UTP + H(+) = UDP-N-acetyl-alpha-D-glucosamine + diphosphate. Its pathway is nucleotide-sugar biosynthesis; UDP-N-acetyl-alpha-D-glucosamine biosynthesis; N-acetyl-alpha-D-glucosamine 1-phosphate from alpha-D-glucosamine 6-phosphate (route II): step 2/2. The protein operates within nucleotide-sugar biosynthesis; UDP-N-acetyl-alpha-D-glucosamine biosynthesis; UDP-N-acetyl-alpha-D-glucosamine from N-acetyl-alpha-D-glucosamine 1-phosphate: step 1/1. It functions in the pathway bacterial outer membrane biogenesis; LPS lipid A biosynthesis. Functionally, catalyzes the last two sequential reactions in the de novo biosynthetic pathway for UDP-N-acetylglucosamine (UDP-GlcNAc). The C-terminal domain catalyzes the transfer of acetyl group from acetyl coenzyme A to glucosamine-1-phosphate (GlcN-1-P) to produce N-acetylglucosamine-1-phosphate (GlcNAc-1-P), which is converted into UDP-GlcNAc by the transfer of uridine 5-monophosphate (from uridine 5-triphosphate), a reaction catalyzed by the N-terminal domain. The polypeptide is Bifunctional protein GlmU (Shewanella amazonensis (strain ATCC BAA-1098 / SB2B)).